The primary structure comprises 211 residues: PDR1 up-regulated protein 1 (211 aa).

Helical transmembrane passes span 45–67 and 82–99; these read ISKA…PYAY and RTIL…NVAA.

Belongs to the PUP1 family.

It localises to the mitochondrion membrane. Its function is as follows. Mitochondrial protein that contributes to the enhanced virulence of C.glabrata strains that acquired azole resistance. This chain is PDR1 up-regulated protein 1, found in Candida glabrata (strain ATCC 2001 / BCRC 20586 / JCM 3761 / NBRC 0622 / NRRL Y-65 / CBS 138) (Yeast).